We begin with the raw amino-acid sequence, 478 residues long: MIKPRTPPGIMELLPREQIAFQRMLDVIRRNYERFGFLPVETPVFELSDVLLTKSGGETERQVYFVQSTGALANAAAAADEGAENGGLPELALRFDLTVPLARYVAEHEHDLSFPFRRYQMQRVYRGERAQRGRFREFYQCDIDVIGKDALSIRYDAEVLAVIHAVFAELGIGDFKVQLNNRKLLRGFFESLGVAEGELQLAVLREVDKIDKRGADYVRDTLVGEGFGIPAEQVARILAFVAVRSNGHADALAQLQALEGSVGASATLGEGIAELREVLELVKALGVPESAYCLNFSIARGLDYYTGTVYETTLTDHPQIGSICSGGRYDSLASHYTKSKLPGVGISIGLTRLFWQLREAGLIQGIAESSVQAMVALMDETRLDDALDIARRLRIGGINTEVQMEPKKIGKQFQYAARAGIRFVVLAGDDELARGVVAVKDLVREQQFDVARDELASTLQVELEQARAMLVAGSVQGD.

Belongs to the class-II aminoacyl-tRNA synthetase family. In terms of assembly, homodimer.

The protein localises to the cytoplasm. The catalysed reaction is tRNA(His) + L-histidine + ATP = L-histidyl-tRNA(His) + AMP + diphosphate + H(+). The chain is Histidine--tRNA ligase (hisS) from Xanthomonas axonopodis pv. citri (strain 306).